A 200-amino-acid chain; its full sequence is 3-isopropylmalate dehydratase small subunit (200 aa).

The protein belongs to the LeuD family. LeuD type 1 subfamily. In terms of assembly, heterodimer of LeuC and LeuD.

It carries out the reaction (2R,3S)-3-isopropylmalate = (2S)-2-isopropylmalate. It participates in amino-acid biosynthesis; L-leucine biosynthesis; L-leucine from 3-methyl-2-oxobutanoate: step 2/4. In terms of biological role, catalyzes the isomerization between 2-isopropylmalate and 3-isopropylmalate, via the formation of 2-isopropylmaleate. This Vibrio vulnificus (strain CMCP6) protein is 3-isopropylmalate dehydratase small subunit.